Consider the following 425-residue polypeptide: Synaptotagmin-4 (425 aa).

The Vesicular portion of the chain corresponds to 1–16; the sequence is MAPITTSRVEFDEIPT. The chain crosses the membrane as a helical span at residues 17-37; it reads VVGIFSAFGLVFTVSLFAWIC. The Cytoplasmic segment spans residues 38–425; it reads CQRRSAKSNK…IAKWHMLCDG (388 aa). 2 disordered regions span residues 102–121 and 126–147; these read NGNF…LENV and FPET…SLTS. A compositionally biased stretch (polar residues) spans 105-119; it reads FPKTNPKAGSSSDLE. Residue Ser-135 is modified to Phosphoserine; by MAPK8. Residues 137-146 show a composition bias toward low complexity; the sequence is ESLKSSTSLT. 2 C2 domains span residues 153-274 and 287-420; these read KLGT…MLMT and GRGE…AKWH. Positions 246, 249, and 252 each coordinate Ca(2+).

Belongs to the synaptotagmin family. Interacts with KIF1A; the interaction increases in presence of calcium and decreases when SYT4 is phosphorylated at Ser-135. Ca(2+) is required as a cofactor. Phosphorylation at Ser-135 by MAPK8/JNK1 reduces interaction with KIF1A and neuronal dense core vesicles mobility. In terms of tissue distribution, widely expressed. Expressed in the brain. Expressed in pituitary gland, cerebellum, cortex, hypothalamus and hippocampus.

It is found in the cytoplasmic vesicle. The protein resides in the secretory vesicle. Its subcellular location is the neuronal dense core vesicle membrane. Its function is as follows. Synaptotagmin family member which does not bind Ca(2+). Involved in neuronal dense core vesicles (DCVs) mobility through its interaction with KIF1A. Upon increased neuronal activity, phosphorylation by MAPK8/JNK1 destabilizes the interaction with KIF1A and captures DCVs to synapses. Plays a role in dendrite formation by melanocytes. The protein is Synaptotagmin-4 (Syt4) of Rattus norvegicus (Rat).